A 465-amino-acid polypeptide reads, in one-letter code: uncharacterized protein (465 aa).

Residues 1 to 50 (MEITDLAAEGNALCRIDDMVMFVPFAAPGDRCTVQVVKKKRNFMQGRIVS) form the TRAM domain. The [4Fe-4S] cluster site is built by cysteine 63, cysteine 69, cysteine 72, and cysteine 168. Glutamine 293, tyrosine 322, glutamate 343, and aspartate 392 together coordinate S-adenosyl-L-methionine. Cysteine 419 serves as the catalytic Nucleophile.

It belongs to the class I-like SAM-binding methyltransferase superfamily. RNA M5U methyltransferase family.

This is an uncharacterized protein from Porphyromonas gingivalis (strain ATCC BAA-308 / W83).